The sequence spans 461 residues: Cysteine--tRNA ligase (461 aa).

Position 28 (C28) interacts with Zn(2+). A 'HIGH' region motif is present at residues 30 to 40 (ITVYDLCHIGH). Zn(2+) is bound by residues C209, H234, and E238. The 'KMSKS' region signature appears at 266–270 (KMSKS). K269 provides a ligand contact to ATP.

The protein belongs to the class-I aminoacyl-tRNA synthetase family. As to quaternary structure, monomer. Zn(2+) serves as cofactor.

Its subcellular location is the cytoplasm. The catalysed reaction is tRNA(Cys) + L-cysteine + ATP = L-cysteinyl-tRNA(Cys) + AMP + diphosphate. The polypeptide is Cysteine--tRNA ligase (Escherichia coli O17:K52:H18 (strain UMN026 / ExPEC)).